A 606-amino-acid chain; its full sequence is Aspartate--tRNA(Asp/Asn) ligase (606 aa).

An L-aspartate-binding site is contributed by E177. An aspartate region spans residues 201-204; the sequence is QLFK. R223 contacts L-aspartate. Residues 223–225 and Q232 each bind ATP; that span reads RDE. An L-aspartate-binding site is contributed by H461. ATP is bound at residue E499. L-aspartate is bound at residue R506. 551–554 is a binding site for ATP; that stretch reads GMDR.

It belongs to the class-II aminoacyl-tRNA synthetase family. Type 1 subfamily. Homodimer.

The protein resides in the cytoplasm. It carries out the reaction tRNA(Asx) + L-aspartate + ATP = L-aspartyl-tRNA(Asx) + AMP + diphosphate. Functionally, aspartyl-tRNA synthetase with relaxed tRNA specificity since it is able to aspartylate not only its cognate tRNA(Asp) but also tRNA(Asn). Reaction proceeds in two steps: L-aspartate is first activated by ATP to form Asp-AMP and then transferred to the acceptor end of tRNA(Asp/Asn). This is Aspartate--tRNA(Asp/Asn) ligase from Prochlorococcus marinus (strain MIT 9303).